The following is a 273-amino-acid chain: Imidazole glycerol phosphate synthase subunit HisF (273 aa).

Residues aspartate 11 and aspartate 134 contribute to the active site.

The protein belongs to the HisA/HisF family. In terms of assembly, heterodimer of HisH and HisF.

It is found in the cytoplasm. The catalysed reaction is 5-[(5-phospho-1-deoxy-D-ribulos-1-ylimino)methylamino]-1-(5-phospho-beta-D-ribosyl)imidazole-4-carboxamide + L-glutamine = D-erythro-1-(imidazol-4-yl)glycerol 3-phosphate + 5-amino-1-(5-phospho-beta-D-ribosyl)imidazole-4-carboxamide + L-glutamate + H(+). It participates in amino-acid biosynthesis; L-histidine biosynthesis; L-histidine from 5-phospho-alpha-D-ribose 1-diphosphate: step 5/9. Functionally, IGPS catalyzes the conversion of PRFAR and glutamine to IGP, AICAR and glutamate. The HisF subunit catalyzes the cyclization activity that produces IGP and AICAR from PRFAR using the ammonia provided by the HisH subunit. This chain is Imidazole glycerol phosphate synthase subunit HisF, found in Methanocella arvoryzae (strain DSM 22066 / NBRC 105507 / MRE50).